Consider the following 346-residue polypeptide: MIEFKQVTKTFHSGNQTVTALDNVNLHVARGEIYGVIGFSGAGKSTLIRSANLLERPTSGEVLINGVNLATLKSRELQKAKRNIGMIFQHFNLLQSKTVFDNVATPLKLTRTPKADIRKRVTELLSFVGLSDKADNYPEQLSGGQKQRIGIARALATNPEVLLCDEATSALDPDTTSSILHLLKKINIEYNITILMITHEMSVIREICDKVAVMEKGRIIEEGSVLSIFSNPQHPTTEKFVRSIIPTGLPARVKEALQQKEPNRRIYEVTVTGDSSHSDLLRSLIQTFGIEVDILHATMNDIQGTSFGRIYFDLRAEPEILAEASNYLKSHPLQPKEVTGDARVAA.

Residues 2 to 241 (IEFKQVTKTF…PQHPTTEKFV (240 aa)) form the ABC transporter domain. 38–45 (GFSGAGKS) contacts ATP.

This sequence belongs to the ABC transporter superfamily. Methionine importer (TC 3.A.1.24) family. In terms of assembly, the complex is composed of two ATP-binding proteins (MetN), two transmembrane proteins (MetI) and a solute-binding protein (MetQ).

The protein localises to the cell membrane. The catalysed reaction is L-methionine(out) + ATP + H2O = L-methionine(in) + ADP + phosphate + H(+). It catalyses the reaction D-methionine(out) + ATP + H2O = D-methionine(in) + ADP + phosphate + H(+). Its function is as follows. Part of the ABC transporter complex MetNIQ involved in methionine import. Responsible for energy coupling to the transport system. This Shouchella clausii (strain KSM-K16) (Alkalihalobacillus clausii) protein is Methionine import ATP-binding protein MetN 1.